A 252-amino-acid polypeptide reads, in one-letter code: tRNA (guanine-N(1)-)-methyltransferase (252 aa).

Residues Gly-113 and 133 to 138 contribute to the S-adenosyl-L-methionine site; that span reads LGDYVL.

This sequence belongs to the RNA methyltransferase TrmD family. As to quaternary structure, homodimer.

Its subcellular location is the cytoplasm. It carries out the reaction guanosine(37) in tRNA + S-adenosyl-L-methionine = N(1)-methylguanosine(37) in tRNA + S-adenosyl-L-homocysteine + H(+). Its function is as follows. Specifically methylates guanosine-37 in various tRNAs. The polypeptide is tRNA (guanine-N(1)-)-methyltransferase (Stenotrophomonas maltophilia (strain R551-3)).